The primary structure comprises 159 residues: uncharacterized protein (159 aa).

4 helical membrane-spanning segments follow: residues T5–V27, A34–V51, S61–L83, and F103–V125.

The protein localises to the cell membrane. This is an uncharacterized protein from Treponema pallidum (strain Nichols).